Here is a 173-residue protein sequence, read N- to C-terminus: Crossover junction endodeoxyribonuclease RuvC (173 aa).

Catalysis depends on residues aspartate 8, glutamate 67, and aspartate 139. Residues aspartate 8, glutamate 67, and aspartate 139 each coordinate Mg(2+).

This sequence belongs to the RuvC family. In terms of assembly, homodimer which binds Holliday junction (HJ) DNA. The HJ becomes 2-fold symmetrical on binding to RuvC with unstacked arms; it has a different conformation from HJ DNA in complex with RuvA. In the full resolvosome a probable DNA-RuvA(4)-RuvB(12)-RuvC(2) complex forms which resolves the HJ. Mg(2+) serves as cofactor.

The protein localises to the cytoplasm. It catalyses the reaction Endonucleolytic cleavage at a junction such as a reciprocal single-stranded crossover between two homologous DNA duplexes (Holliday junction).. In terms of biological role, the RuvA-RuvB-RuvC complex processes Holliday junction (HJ) DNA during genetic recombination and DNA repair. Endonuclease that resolves HJ intermediates. Cleaves cruciform DNA by making single-stranded nicks across the HJ at symmetrical positions within the homologous arms, yielding a 5'-phosphate and a 3'-hydroxyl group; requires a central core of homology in the junction. The consensus cleavage sequence is 5'-(A/T)TT(C/G)-3'. Cleavage occurs on the 3'-side of the TT dinucleotide at the point of strand exchange. HJ branch migration catalyzed by RuvA-RuvB allows RuvC to scan DNA until it finds its consensus sequence, where it cleaves and resolves the cruciform DNA. The protein is Crossover junction endodeoxyribonuclease RuvC of Salmonella choleraesuis (strain SC-B67).